Consider the following 512-residue polypeptide: Alpha-amylase (512 aa).

Residues 1–29 (MKQQKRLYARLLTLLFALIFLLPHSAAAA) form the signal peptide. The Ca(2+) site is built by N133, D190, A210, D212, D223, D229, D231, and D233. Residue D190 coordinates Na(+). Na(+)-binding residues include D212, D223, and D229. D260 (nucleophile) is an active-site residue. H264 is a Ca(2+) binding site. E290 acts as the Proton donor in catalysis. 5 residues coordinate Ca(2+): G329, Y331, H435, D436, and D459.

It belongs to the glycosyl hydrolase 13 family. As to quaternary structure, monomer. Ca(2+) is required as a cofactor. It depends on Na(+) as a cofactor.

It localises to the secreted. The enzyme catalyses Endohydrolysis of (1-&gt;4)-alpha-D-glucosidic linkages in polysaccharides containing three or more (1-&gt;4)-alpha-linked D-glucose units.. The polypeptide is Alpha-amylase (amyS) (Bacillus licheniformis).